Reading from the N-terminus, the 61-residue chain is Small ribosomal subunit protein uS14C (61 aa).

Zn(2+) contacts are provided by Cys-24, Cys-27, Cys-40, and Cys-43.

Belongs to the universal ribosomal protein uS14 family. Zinc-binding uS14 subfamily. Part of the 30S ribosomal subunit. Contacts proteins S3 and S10. Zn(2+) is required as a cofactor.

In terms of biological role, binds 16S rRNA, required for the assembly of 30S particles and may also be responsible for determining the conformation of the 16S rRNA at the A site. The polypeptide is Small ribosomal subunit protein uS14C (Enterococcus faecalis (strain ATCC 700802 / V583)).